The primary structure comprises 141 residues: Nucleoside diphosphate kinase (141 aa).

Lys11, Phe59, Arg87, Thr93, Arg104, and Asn114 together coordinate ATP. Residue His117 is the Pros-phosphohistidine intermediate of the active site.

The protein belongs to the NDK family. Homotetramer. The cofactor is Mg(2+).

It is found in the cytoplasm. It catalyses the reaction a 2'-deoxyribonucleoside 5'-diphosphate + ATP = a 2'-deoxyribonucleoside 5'-triphosphate + ADP. The catalysed reaction is a ribonucleoside 5'-diphosphate + ATP = a ribonucleoside 5'-triphosphate + ADP. Major role in the synthesis of nucleoside triphosphates other than ATP. The ATP gamma phosphate is transferred to the NDP beta phosphate via a ping-pong mechanism, using a phosphorylated active-site intermediate. The polypeptide is Nucleoside diphosphate kinase (Serratia proteamaculans (strain 568)).